A 291-amino-acid chain; its full sequence is ATP synthase gamma chain (291 aa).

This sequence belongs to the ATPase gamma chain family. As to quaternary structure, F-type ATPases have 2 components, CF(1) - the catalytic core - and CF(0) - the membrane proton channel. CF(1) has five subunits: alpha(3), beta(3), gamma(1), delta(1), epsilon(1). CF(0) has three main subunits: a, b and c.

It localises to the cell inner membrane. Functionally, produces ATP from ADP in the presence of a proton gradient across the membrane. The gamma chain is believed to be important in regulating ATPase activity and the flow of protons through the CF(0) complex. The chain is ATP synthase gamma chain from Neisseria meningitidis serogroup C (strain 053442).